A 321-amino-acid polypeptide reads, in one-letter code: MGSLEVPCIDLSENDTSIVVKELLDACKNWGFVSLKNHGIPLDEIDRTFKLADKFFDIPVEEKQKYLFKGGRLHSGYTGHFGEKLDMEHQSRGDLKESYDLAGFPDPKLENLCPFIAEHMDEFLQFQRHCYKLTLRLLDFFAIGFGIPPDFFSKSHSSEEDVLRLLKYSIPEGVERREDDEDAGAHSDYGSITLLFQRDAAGLEIRPPNFVKDMDWIKVNVQPDVVLVNIADMLQFWTSGKLRSTVHRVRIDPGVKTRQTIAYFVTPDPETPLSPLFEEKTGKDIETVTAGEWIDGRINFTYGYSAPPKGYLGSQNDGIVA.

The Fe2OG dioxygenase domain occupies 159–267 (EEDVLRLLKY…RQTIAYFVTP (109 aa)).

It belongs to the UPF0676 family.

It localises to the cytoplasm. The protein resides in the nucleus. This chain is UPF0676 protein C1494.01, found in Schizosaccharomyces pombe (strain 972 / ATCC 24843) (Fission yeast).